A 250-amino-acid polypeptide reads, in one-letter code: Probable transcriptional regulatory protein RHA1_ro06891 (250 aa).

The protein belongs to the TACO1 family.

It is found in the cytoplasm. The polypeptide is Probable transcriptional regulatory protein RHA1_ro06891 (Rhodococcus jostii (strain RHA1)).